A 437-amino-acid polypeptide reads, in one-letter code: MELNGPPSSQVPHTPTCAPSLPITVAGTLLRGPQLLLRAAEKYPRTPKCARCRNHGVVSALKGHKRYCRWKDCMCAKCTLIAERQRVMAAQVALRRQQAQEENEARELQLLYGTAEGLALAAANGILPPRPAYEVFGSLCGEGGTDSKIQKFDLFPKSLIPRSMTPQLPSGGKPGSPDSEPVSGSAPGASSPEAQPGSGSENGDGESLLSSPISKELKEGEESPSLISPLSSESGSDAEKDEQDPSSSSLARQRTPINILTRVFPAQKRSVLELVLQGCGGDVVQAIEQILNNRSQDKGEGTWSKDGALQSIQPSVSSTHRPLIAGALTPAIGTIGSRSAFSPLQPNAAHFGTEANTYQLGGHIGLNPLRLAYSAHSRGLAFMAPYSTAGFMPTLGFRPPMDYAFSDLMRDRANVHKDQVYTNGLYGPVVNNNAEKQ.

Positions 49 to 96 (CARCRNHGVVSALKGHKRYCRWKDCMCAKCTLIAERQRVMAAQVALRR) form a DNA-binding region, DM. The tract at residues 160–253 (IPRSMTPQLP…DPSSSSLARQ (94 aa)) is disordered. Composition is skewed to low complexity over residues 179–201 (SEPVSGSAPGASSPEAQPGSGSE) and 223–235 (SPSLISPLSSESG). The DMA domain occupies 254 to 289 (RTPINILTRVFPAQKRSVLELVLQGCGGDVVQAIEQ).

This sequence belongs to the DMRT family.

Its subcellular location is the nucleus. May be involved in sexual development. The sequence is that of Doublesex- and mab-3-related transcription factor A2 (dmrta2) from Xenopus laevis (African clawed frog).